We begin with the raw amino-acid sequence, 301 residues long: MEVTLKRSAALARQTTPLLRPLRPVATYPSNNNNNNNPTPQQRRPYSLFSSLTRPPPNYPGHVPLSFVEKTALAIGSGLISLKNPRRGDLIATFAETTSTPYFIYRLRDAMLSSPTGRRILRDRPRITSTSLNLPYLRSLPPNTVGHTYISWLDREGVSPDTRSPVRYIDDEECAYVMQRYRECHDFYHALTGLPVVREGEVALKAFEFANTLLPMTGLSVFSLVGMKKKERERFWGVYGPWAVRNGLRAKEVINVYWEEVLEKDVGELRKELGVEVPADLREMRRREREEKKRREAAARG.

A mitochondrion-targeting transit peptide spans 1-46 (MEVTLKRSAALARQTTPLLRPLRPVATYPSNNNNNNNPTPQQRRPY). A disordered region spans residues 14 to 48 (QTTPLLRPLRPVATYPSNNNNNNNPTPQQRRPYSL). Residues 38-48 (PTPQQRRPYSL) show a composition bias toward polar residues. Zn(2+)-binding residues include histidine 185, aspartate 186, histidine 189, and glutamate 201.

Belongs to the COQ4 family. Component of a multi-subunit COQ enzyme complex, composed of at least COQ3, COQ4, COQ5, COQ6, COQ7 and COQ9. It depends on Zn(2+) as a cofactor.

It is found in the mitochondrion inner membrane. It carries out the reaction a 4-hydroxy-3-methoxy-5-(all-trans-polyprenyl)benzoate + H(+) = a 2-methoxy-6-(all-trans-polyprenyl)phenol + CO2. It functions in the pathway cofactor biosynthesis; ubiquinone biosynthesis. Its function is as follows. Lyase that catalyzes the C1-decarboxylation of 4-hydroxy-3-methoxy-5-(all-trans-polyprenyl)benzoic acid into 2-methoxy-6-(all-trans-polyprenyl)phenol during ubiquinone biosynthesis. The chain is Ubiquinone biosynthesis protein COQ4, mitochondrial from Podospora anserina (strain S / ATCC MYA-4624 / DSM 980 / FGSC 10383) (Pleurage anserina).